The primary structure comprises 300 residues: UDP-N-acetylenolpyruvoylglucosamine reductase (300 aa).

The FAD-binding PCMH-type domain occupies 28–193 (KTGGPADWLA…LDATFALKLG (166 aa)). Arg-172 is an active-site residue. Ser-222 functions as the Proton donor in the catalytic mechanism. Glu-292 is a catalytic residue.

The protein belongs to the MurB family. Requires FAD as cofactor.

The protein resides in the cytoplasm. It carries out the reaction UDP-N-acetyl-alpha-D-muramate + NADP(+) = UDP-N-acetyl-3-O-(1-carboxyvinyl)-alpha-D-glucosamine + NADPH + H(+). It functions in the pathway cell wall biogenesis; peptidoglycan biosynthesis. Cell wall formation. The chain is UDP-N-acetylenolpyruvoylglucosamine reductase from Limosilactobacillus fermentum (strain NBRC 3956 / LMG 18251) (Lactobacillus fermentum).